Here is a 367-residue protein sequence, read N- to C-terminus: Cobalt-precorrin-5B C(1)-methyltransferase (367 aa).

The protein belongs to the CbiD family.

It catalyses the reaction Co-precorrin-5B + S-adenosyl-L-methionine = Co-precorrin-6A + S-adenosyl-L-homocysteine. It functions in the pathway cofactor biosynthesis; adenosylcobalamin biosynthesis; cob(II)yrinate a,c-diamide from sirohydrochlorin (anaerobic route): step 6/10. Its function is as follows. Catalyzes the methylation of C-1 in cobalt-precorrin-5B to form cobalt-precorrin-6A. This is Cobalt-precorrin-5B C(1)-methyltransferase from Priestia megaterium (Bacillus megaterium).